The primary structure comprises 212 residues: MSLRFVISGTDTGIGKTVFAAALTHALEAHYWKPVQSGLEEETDSQTVARLAGASHARILPEAYRLKTPASPHLSARLDNVSIDPARLLPPRPDGPLVIEGAGGLLVPLTDRLLFADIFALWQIPLILCARTALGTINHTLLSLEALRHRAIPVQGVVFIGDEDRENERVITDIGAVRRLGRLPRLPELTPEALHQAFAQHFNLADFLEVPA.

An ATP-binding site is contributed by 13-18 (GIGKTV). Mg(2+) is bound at residue Thr17. The active site involves Lys33. Ser37 lines the substrate pocket. Mg(2+) is bound at residue Glu100. Residues 100-103 (EGAG) and 184-186 (PRL) contribute to the ATP site.

The protein belongs to the dethiobiotin synthetase family. In terms of assembly, homodimer. Mg(2+) is required as a cofactor.

It is found in the cytoplasm. The catalysed reaction is (7R,8S)-7,8-diammoniononanoate + CO2 + ATP = (4R,5S)-dethiobiotin + ADP + phosphate + 3 H(+). The protein operates within cofactor biosynthesis; biotin biosynthesis; biotin from 7,8-diaminononanoate: step 1/2. In terms of biological role, catalyzes a mechanistically unusual reaction, the ATP-dependent insertion of CO2 between the N7 and N8 nitrogen atoms of 7,8-diaminopelargonic acid (DAPA, also called 7,8-diammoniononanoate) to form a ureido ring. The sequence is that of ATP-dependent dethiobiotin synthetase BioD from Agrobacterium fabrum (strain C58 / ATCC 33970) (Agrobacterium tumefaciens (strain C58)).